The chain runs to 338 residues: Pyridoxal 5'-phosphate synthase subunit PdxS (338 aa).

D66 contacts D-ribose 5-phosphate. Residue K123 is the Schiff-base intermediate with D-ribose 5-phosphate of the active site. D-ribose 5-phosphate is bound at residue G195. K207 serves as a coordination point for D-glyceraldehyde 3-phosphate. D-ribose 5-phosphate contacts are provided by residues G256 and 277 to 278; that span reads GS.

It belongs to the PdxS/SNZ family. As to quaternary structure, in the presence of PdxT, forms a dodecamer of heterodimers.

It carries out the reaction aldehydo-D-ribose 5-phosphate + D-glyceraldehyde 3-phosphate + L-glutamine = pyridoxal 5'-phosphate + L-glutamate + phosphate + 3 H2O + H(+). Its pathway is cofactor biosynthesis; pyridoxal 5'-phosphate biosynthesis. In terms of biological role, catalyzes the formation of pyridoxal 5'-phosphate from ribose 5-phosphate (RBP), glyceraldehyde 3-phosphate (G3P) and ammonia. The ammonia is provided by the PdxT subunit. Can also use ribulose 5-phosphate and dihydroxyacetone phosphate as substrates, resulting from enzyme-catalyzed isomerization of RBP and G3P, respectively. In Saccharolobus islandicus (strain L.S.2.15 / Lassen #1) (Sulfolobus islandicus), this protein is Pyridoxal 5'-phosphate synthase subunit PdxS.